Consider the following 164-residue polypeptide: Putative pre-16S rRNA nuclease (164 aa).

Belongs to the YqgF nuclease family.

The protein localises to the cytoplasm. In terms of biological role, could be a nuclease involved in processing of the 5'-end of pre-16S rRNA. This Synechococcus sp. (strain CC9902) protein is Putative pre-16S rRNA nuclease.